The primary structure comprises 98 residues: NADH-ubiquinone oxidoreductase chain 4L (98 aa).

Helical transmembrane passes span 1–21 (MTSI…GVLM), 28–48 (STLL…SLLI), and 59–79 (APLI…ALLV).

Belongs to the complex I subunit 4L family. Core subunit of respiratory chain NADH dehydrogenase (Complex I) which is composed of 45 different subunits.

The protein resides in the mitochondrion inner membrane. It carries out the reaction a ubiquinone + NADH + 5 H(+)(in) = a ubiquinol + NAD(+) + 4 H(+)(out). Core subunit of the mitochondrial membrane respiratory chain NADH dehydrogenase (Complex I) which catalyzes electron transfer from NADH through the respiratory chain, using ubiquinone as an electron acceptor. Part of the enzyme membrane arm which is embedded in the lipid bilayer and involved in proton translocation. This is NADH-ubiquinone oxidoreductase chain 4L (MT-ND4L) from Phascolarctos cinereus (Koala).